Consider the following 110-residue polypeptide: Large ribosomal subunit protein uL22 (110 aa).

The protein belongs to the universal ribosomal protein uL22 family. In terms of assembly, part of the 50S ribosomal subunit.

In terms of biological role, this protein binds specifically to 23S rRNA; its binding is stimulated by other ribosomal proteins, e.g. L4, L17, and L20. It is important during the early stages of 50S assembly. It makes multiple contacts with different domains of the 23S rRNA in the assembled 50S subunit and ribosome. Functionally, the globular domain of the protein is located near the polypeptide exit tunnel on the outside of the subunit, while an extended beta-hairpin is found that lines the wall of the exit tunnel in the center of the 70S ribosome. This Alkaliphilus oremlandii (strain OhILAs) (Clostridium oremlandii (strain OhILAs)) protein is Large ribosomal subunit protein uL22.